The following is a 287-amino-acid chain: Small ribosomal subunit protein uS3 (287 aa).

The KH type-2 domain maps to 38–106 (IRRLLATGLE…QVQLNILEVK (69 aa)). The segment at 216–287 (AAAPAGADRP…AETTTQNPGS (72 aa)) is disordered. Low complexity predominate over residues 238-287 (SGASGTTATSTDAGRAASGTQEAPAAAEAAAGTEAAAGAAAETTTQNPGS).

Belongs to the universal ribosomal protein uS3 family. In terms of assembly, part of the 30S ribosomal subunit. Forms a tight complex with proteins S10 and S14.

Functionally, binds the lower part of the 30S subunit head. Binds mRNA in the 70S ribosome, positioning it for translation. This Mycobacterium sp. (strain JLS) protein is Small ribosomal subunit protein uS3.